Consider the following 456-residue polypeptide: Protein shifted (456 aa).

A signal peptide spans 1–30 (MTHQGIGCLVKWLYLVLIVHTLLCIGQLEC). Residues 34-112 (HHNRNNNNNN…GGGGSRHNRN (79 aa)) form a disordered region. The segment covering 44–55 (RRADSSSSEEGH) has biased composition (basic and acidic residues). An N-linked (GlcNAc...) asparagine glycan is attached at Asn57. The segment covering 77-87 (HQPRRGQRKKQ) has biased composition (basic residues). The span at 88–107 (QGGGGGGSGGGGGNGGGGGS) shows a compositional bias: gly residues. The WIF domain occupies 119 to 261 (LWINEQQLKM…PIRLNFKKEC (143 aa)). Asn173, Asn217, and Asn227 each carry an N-linked (GlcNAc...) asparagine glycan. Disulfide bonds link Cys224-Cys261, Cys283-Cys293, Cys287-Cys299, Cys301-Cys310, Cys315-Cys325, Cys319-Cys331, Cys333-Cys342, Cys347-Cys357, Cys351-Cys363, Cys365-Cys374, Cys379-Cys389, Cys383-Cys395, Cys397-Cys406, Cys416-Cys423, Cys418-Cys429, and Cys431-Cys440. 5 consecutive EGF-like domains span residues 279 to 311 (TLQE…QYCE), 315 to 342 (CFPQ…GTQC), 343 to 375 (EGGI…LRCE), 376 to 407 (YSKC…DHCE), and 412 to 441 (QRSI…RHCN). A glycan (N-linked (GlcNAc...) asparagine) is linked at Asn324. N-linked (GlcNAc...) asparagine glycosylation is present at Asn420.

Interacts with hh. As to expression, at the blastoderm stage, it is ubiquitously expressed. As embryogenesis continues, it is expressed in the epidermis and central nervous system, this expression being segmentally modulated. Also highly expressed at the foregut and hindgut throughout embryogenesis. In third instar wing imaginal disks, it is highly expressed in the most anterior and posterior parts of the disk and weakly expressed at the antero/posterior (A/P) compartment border. In the leg disks and the antenna part of the eye-antennal imaginal disk it is also weakly expressed at the A/P compartment border. Weakly expressed in the morphogenetic furrow in the eye primordium.

It localises to the secreted. It is found in the extracellular space. The protein resides in the extracellular matrix. Its function is as follows. Required for normal accumulation and movement of lipid-modified hedgehog (hh) morphogen. May act by stabilizing the interaction between heparan sulfate proteoglycans (HSPGs) and hh, HSPGs being required for diffusion of hh morphogen. Not involved in wingless (wg) morphogen movement, suggesting that it may provide HSPG specificity for Hh. The sequence is that of Protein shifted (shf) from Drosophila melanogaster (Fruit fly).